The sequence spans 126 residues: Protein HEAT-INDUCED TAS1 TARGET 3 (126 aa).

The protein belongs to the heat induced plant HTT protein family. As to expression, expressed in seedlings, leaves, stems, inflorescences and siliques.

It is found in the cytoplasm. The protein localises to the nucleus. Functionally, mediates both basal and acquired thermotolerance. This chain is Protein HEAT-INDUCED TAS1 TARGET 3, found in Arabidopsis thaliana (Mouse-ear cress).